A 53-amino-acid chain; its full sequence is UPF0337 protein LJ_0034.1 (53 aa).

The tract at residues 27–53 (AREVEGKAQQAKGKVKSKATEVKEDLE) is disordered. Positions 44-53 (KATEVKEDLE) are enriched in basic and acidic residues.

The protein belongs to the UPF0337 (CsbD) family.

The polypeptide is UPF0337 protein LJ_0034.1 (Lactobacillus johnsonii (strain CNCM I-12250 / La1 / NCC 533)).